We begin with the raw amino-acid sequence, 464 residues long: UDP-N-acetylmuramoylalanine--D-glutamate ligase (464 aa).

112-118 is an ATP binding site; sequence GTDGKTT.

Belongs to the MurCDEF family.

Its subcellular location is the cytoplasm. The enzyme catalyses UDP-N-acetyl-alpha-D-muramoyl-L-alanine + D-glutamate + ATP = UDP-N-acetyl-alpha-D-muramoyl-L-alanyl-D-glutamate + ADP + phosphate + H(+). The protein operates within cell wall biogenesis; peptidoglycan biosynthesis. In terms of biological role, cell wall formation. Catalyzes the addition of glutamate to the nucleotide precursor UDP-N-acetylmuramoyl-L-alanine (UMA). The protein is UDP-N-acetylmuramoylalanine--D-glutamate ligase of Pelodictyon phaeoclathratiforme (strain DSM 5477 / BU-1).